We begin with the raw amino-acid sequence, 612 residues long: C4-dicarboxylate transport sensor protein DctB (612 aa).

A run of 2 helical transmembrane segments spans residues 23–43 (SLVILALLLAPLLWPLQYFAE) and 292–312 (VLLIGGATLLALLLLLTLLTL). Residues 328-376 (KRQLEERVLERTRELENANAQLQQEVHEREQAQRELMRAQDEVVQAGKL) adopt a coiled-coil conformation. Residues 385–599 (SISHELNQPL…VVRLHLLPGV (215 aa)) enclose the Histidine kinase domain. His-388 carries the post-translational modification Phosphohistidine; by autocatalysis.

In terms of processing, autophosphorylated.

It localises to the cell inner membrane. The enzyme catalyses ATP + protein L-histidine = ADP + protein N-phospho-L-histidine.. Member of the two-component regulatory system DctB/DctD, which regulates C4-dicarboxylate transport via regulation of expression of the dctPQM operon and dctA. DctB functions as a membrane-associated protein kinase that phosphorylates DctD in response to environmental signals. This Pseudomonas aeruginosa (strain ATCC 15692 / DSM 22644 / CIP 104116 / JCM 14847 / LMG 12228 / 1C / PRS 101 / PAO1) protein is C4-dicarboxylate transport sensor protein DctB.